Consider the following 226-residue polypeptide: Cytidylate kinase (226 aa).

Residue G12–T20 coordinates ATP.

The protein belongs to the cytidylate kinase family. Type 1 subfamily.

It localises to the cytoplasm. It catalyses the reaction CMP + ATP = CDP + ADP. It carries out the reaction dCMP + ATP = dCDP + ADP. The polypeptide is Cytidylate kinase (Vibrio vulnificus (strain YJ016)).